A 62-amino-acid polypeptide reads, in one-letter code: Conotoxin Mi5.2 (62 aa).

The signal sequence occupies residues 1 to 19 (MRCVPVFIILLLLIPSASS). Positions 20 to 50 (VDVQPLTRDDVPLASFLDDARRTLRSPWMTR) are excised as a propeptide.

Belongs to the conotoxin T superfamily. In terms of processing, contains 2 disulfide bonds that can be either 'C1-C3, C2-C4' or 'C1-C4, C2-C3', since these disulfide connectivities have been observed for conotoxins with cysteine framework V (for examples, see AC P0DQQ7 and AC P81755). As to expression, expressed by the venom duct.

It is found in the secreted. This chain is Conotoxin Mi5.2, found in Conus miles (Soldier cone).